An 891-amino-acid chain; its full sequence is Translation initiation factor IF-2 (891 aa).

The region spanning 390–559 (NRAPIVTIMG…LLQSDMLELK (170 aa)) is the tr-type G domain. The interval 399–406 (GHVDHGKT) is G1. 399 to 406 (GHVDHGKT) contributes to the GTP binding site. Residues 424–428 (GITQS) are G2. A G3 region spans residues 445–448 (DTPG). Residues 445–449 (DTPGH) and 499–502 (NKID) each bind GTP. The interval 499-502 (NKID) is G4. The interval 535-537 (SAT) is G5.

Belongs to the TRAFAC class translation factor GTPase superfamily. Classic translation factor GTPase family. IF-2 subfamily.

Its subcellular location is the cytoplasm. In terms of biological role, one of the essential components for the initiation of protein synthesis. Protects formylmethionyl-tRNA from spontaneous hydrolysis and promotes its binding to the 30S ribosomal subunits. Also involved in the hydrolysis of GTP during the formation of the 70S ribosomal complex. The polypeptide is Translation initiation factor IF-2 (Blochmanniella pennsylvanica (strain BPEN)).